Here is a 340-residue protein sequence, read N- to C-terminus: Phosphate acyltransferase (340 aa).

It belongs to the PlsX family. As to quaternary structure, homodimer. Probably interacts with PlsY.

The protein localises to the cytoplasm. The catalysed reaction is a fatty acyl-[ACP] + phosphate = an acyl phosphate + holo-[ACP]. It participates in lipid metabolism; phospholipid metabolism. Its function is as follows. Catalyzes the reversible formation of acyl-phosphate (acyl-PO(4)) from acyl-[acyl-carrier-protein] (acyl-ACP). This enzyme utilizes acyl-ACP as fatty acyl donor, but not acyl-CoA. In Pseudomonas syringae pv. syringae (strain B728a), this protein is Phosphate acyltransferase.